The sequence spans 686 residues: MRLEIPVGERAIVLETGKLARQAGGAVTARFGDTTVLSTATRSEEPRPGATFLPLSVDIEERMSSAGKIPGGFLKREGKPSEKAILTARLTDRPIRPLFPKDYYYEVQVIGTVLVADQENPYDVVSMVGASAALALSDIPFGGPIGAVRVGRHPDGGFILNPTYQQLEESDLDIVVAGTKEAITMVEAGAREVTEDVVVEALEVAQGVIREQAEAIERWAAEHGEEKQPFEEPGENPFVEELRGAYLERIKEGLISTDRRARHEAIDLLKEELVEGRSEEEVPLVLDALAQLQKEAFRKLYLEDRKRTDLRAFDEIRPTTAEAHVLPRVHGTGLFTRGETQVLSSLALADLGLVQRLDTLEPQTTKRYMHHYYFPPYSTGETGRLGPPRRREIGHGALAERALLPVIPSEEEFPYAIRIISEVLESNGSSSMASVCGSTLALMDGGVPIKAPVAGVAMGLVKEGDDYVILTDIQGLEDHMGDMDFKVAGTRDGITALQMDMKITGVSAELLKEALEQARRGRLQILDIMREEIAEPRPEISDHAPRVEVIQIPTDKIGLLIGPGGKTINALQDEYGVNISVENDGTVYVAGVEGMSVKAAVSAIKGMTKEVEAGDIYVGKVVKTTNFGAFVELTPGRDGLLHISRLAPGKQRVRRVEDVLNEGDVVKVRVLEIDKQNRISLEMVED.

Residues aspartate 478 and aspartate 484 each coordinate Mg(2+). Positions 545-604 (PRVEVIQIPTDKIGLLIGPGGKTINALQDEYGVNISVENDGTVYVAGVEGMSVKAAVSAI) constitute a KH domain. One can recognise an S1 motif domain in the interval 614–684 (GDIYVGKVVK…KQNRISLEMV (71 aa)).

It belongs to the polyribonucleotide nucleotidyltransferase family. It depends on Mg(2+) as a cofactor.

It is found in the cytoplasm. It carries out the reaction RNA(n+1) + phosphate = RNA(n) + a ribonucleoside 5'-diphosphate. Its function is as follows. Involved in mRNA degradation. Catalyzes the phosphorolysis of single-stranded polyribonucleotides processively in the 3'- to 5'-direction. The polypeptide is Polyribonucleotide nucleotidyltransferase (Rubrobacter xylanophilus (strain DSM 9941 / JCM 11954 / NBRC 16129 / PRD-1)).